Reading from the N-terminus, the 418-residue chain is Torsin-4A-B (418 aa).

The chain crosses the membrane as a helical span at residues 128-144 (CLLLFVGIVCFQIFNAI). 200-207 (GPSGVGKS) serves as a coordination point for ATP.

This sequence belongs to the ClpA/ClpB family. Torsin subfamily.

The protein localises to the membrane. This is Torsin-4A-B (tor4a-b) from Xenopus laevis (African clawed frog).